Here is a 143-residue protein sequence, read N- to C-terminus: Putative glycerol transporter Lin0368 (143 aa).

A run of 4 helical transmembrane segments spans residues 6–26 (GMIG…PLAE), 27–47 (NYGI…MWFM), 60–80 (AAFV…DVFM), and 90–110 (LPTI…AAAI). Residues 118-143 (HEAKQEKTEPGMNIKEEERLNENQLV) form a disordered region.

It is found in the membrane. Functionally, could be involved in the glycerol uptake either via facilitated diffusion or active transport. The polypeptide is Putative glycerol transporter Lin0368 (Listeria innocua serovar 6a (strain ATCC BAA-680 / CLIP 11262)).